The following is a 356-amino-acid chain: Probable dual-specificity RNA methyltransferase RlmN (356 aa).

Glu100 serves as the catalytic Proton acceptor. The Radical SAM core domain occupies 106 to 340 (TQQRLTVCLS…VSLRASRGLD (235 aa)). A disulfide bridge links Cys113 with Cys345. The [4Fe-4S] cluster site is built by Cys120, Cys124, and Cys127. Residues 167-168 (GE), Ser197, 226-228 (SLH), and Asn302 contribute to the S-adenosyl-L-methionine site. Cys345 serves as the catalytic S-methylcysteine intermediate.

It belongs to the radical SAM superfamily. RlmN family. [4Fe-4S] cluster serves as cofactor.

Its subcellular location is the cytoplasm. It carries out the reaction adenosine(2503) in 23S rRNA + 2 reduced [2Fe-2S]-[ferredoxin] + 2 S-adenosyl-L-methionine = 2-methyladenosine(2503) in 23S rRNA + 5'-deoxyadenosine + L-methionine + 2 oxidized [2Fe-2S]-[ferredoxin] + S-adenosyl-L-homocysteine. It catalyses the reaction adenosine(37) in tRNA + 2 reduced [2Fe-2S]-[ferredoxin] + 2 S-adenosyl-L-methionine = 2-methyladenosine(37) in tRNA + 5'-deoxyadenosine + L-methionine + 2 oxidized [2Fe-2S]-[ferredoxin] + S-adenosyl-L-homocysteine. In terms of biological role, specifically methylates position 2 of adenine 2503 in 23S rRNA and position 2 of adenine 37 in tRNAs. This is Probable dual-specificity RNA methyltransferase RlmN from Prochlorococcus marinus (strain MIT 9303).